The chain runs to 334 residues: Thiamine-binding periplasmic protein (334 aa).

Residues 1–23 form the signal peptide; sequence MRLLSLLTFSLFAVIGLAPAAQA. Residues 64–65, 166–167, Trp202, and 220–223 contribute to the thiamine site; these read DG, AT, and YTTS.

It belongs to the bacterial solute-binding protein 1 family. As to quaternary structure, the complex is composed of two ATP-binding proteins (ThiQ), two transmembrane proteins (ThiP) and a solute-binding protein (ThiB).

The protein resides in the periplasm. Its function is as follows. Part of the ABC transporter complex ThiBPQ involved in thiamine import. The polypeptide is Thiamine-binding periplasmic protein (thiB) (Brucella suis biovar 1 (strain 1330)).